We begin with the raw amino-acid sequence, 76 residues long: MARKGRPNKRRKVCFFKVNKIKHIDYKDIDLLKKFISERGKILPRRVTGTSAKYQRALTIAIKRSRQVALLPYTAE.

This sequence belongs to the bacterial ribosomal protein bS18 family. As to quaternary structure, part of the 30S ribosomal subunit. Forms a tight heterodimer with protein bS6.

In terms of biological role, binds as a heterodimer with protein bS6 to the central domain of the 16S rRNA, where it helps stabilize the platform of the 30S subunit. This Brevibacillus brevis (strain 47 / JCM 6285 / NBRC 100599) protein is Small ribosomal subunit protein bS18.